Here is a 97-residue protein sequence, read N- to C-terminus: Mapk-regulated corepressor-interacting protein 1 (97 aa).

Positions 1–30 (MTSSPVSRVVYNGKRTSSPRSPPSSSEIFT) are disordered. 2 positions are modified to phosphoserine: serine 21 and serine 24. Threonine 30 is modified (phosphothreonine). Tyrosine 41 carries the post-translational modification Phosphotyrosine. Residue lysine 79 is modified to N6-acetyllysine. The PXDLS motif motif lies at 80–84 (PIDLS).

This sequence belongs to the MCRIP family. In terms of assembly, interacts (unphosphorylated form, via the PXDLS motif) with CTBP1, competitively inhibiting CTBP-ZEB1 interaction. Interacts with CTBP2. Interacts with MCRIP2. Interacts with DDX6. Post-translationally, phosphorylation by MAPK3/1 (ERK1/2) regulates MCRIP1 binding to CTBP(s).

It is found in the nucleus. The protein resides in the cytoplasm. It localises to the stress granule. Its function is as follows. The phosphorylation status of MCRIP1 functions as a molecular switch to regulate epithelial-mesenchymal transition. Unphosphorylated MCRIP1 binds to and inhibits the transcriptional corepressor CTBP(s). When phosphorylated by MAPK/ERK, MCRIP1 releases CTBP(s) resulting in transcriptional silencing of the E-cadherin gene and induction of epithelial-mesenchymal transition. This is Mapk-regulated corepressor-interacting protein 1 from Homo sapiens (Human).